The primary structure comprises 763 residues: Phosphoglycerol transferase I (763 aa).

Transmembrane regions (helical) follow at residues Met1–Ala21, Asn24–Thr44, Ile77–Ile97, and Val108–Phe128.

It belongs to the OpgB family.

It localises to the cell inner membrane. It catalyses the reaction a phosphatidylglycerol + a membrane-derived-oligosaccharide D-glucose = a 1,2-diacyl-sn-glycerol + a membrane-derived-oligosaccharide 6-(glycerophospho)-D-glucose.. It functions in the pathway glycan metabolism; osmoregulated periplasmic glucan (OPG) biosynthesis. Functionally, transfers a phosphoglycerol residue from phosphatidylglycerol to the membrane-bound nascent glucan backbones. The polypeptide is Phosphoglycerol transferase I (Salmonella arizonae (strain ATCC BAA-731 / CDC346-86 / RSK2980)).